Consider the following 142-residue polypeptide: Transcription antitermination protein NusB (142 aa).

It belongs to the NusB family.

Involved in transcription antitermination. Required for transcription of ribosomal RNA (rRNA) genes. Binds specifically to the boxA antiterminator sequence of the ribosomal RNA (rrn) operons. The protein is Transcription antitermination protein NusB of Latilactobacillus sakei subsp. sakei (strain 23K) (Lactobacillus sakei subsp. sakei).